The following is a 126-amino-acid chain: Small ribosomal subunit protein uS8 (126 aa).

It belongs to the universal ribosomal protein uS8 family. In terms of assembly, part of the 30S ribosomal subunit. Contacts proteins S5 and S12.

One of the primary rRNA binding proteins, it binds directly to 16S rRNA central domain where it helps coordinate assembly of the platform of the 30S subunit. The protein is Small ribosomal subunit protein uS8 of Desulfovibrio desulfuricans (strain ATCC 27774 / DSM 6949 / MB).